We begin with the raw amino-acid sequence, 282 residues long: Probable xyloglucan endotransglucosylase/hydrolase protein 18 (282 aa).

Residues 1–26 (MKLSCGTSFAFLIMFLFAAQSMHVYA) form the signal peptide. Residues 27-218 (GSFHKDVQIH…WSKAPFTAFY (192 aa)) enclose the GH16 domain. Glu-104 (nucleophile) is an active-site residue. Residue Glu-108 is the Proton donor of the active site. Glu-108 provides a ligand contact to xyloglucan. An N-linked (GlcNAc...) asparagine glycan is attached at Asn-112. Residues 121 to 123 (HTN), 131 to 133 (DKE), 197 to 198 (HW), and Gly-202 each bind xyloglucan. The cysteines at positions 226 and 235 are disulfide-linked. N-linked (GlcNAc...) asparagine glycosylation is present at Asn-238. A disulfide bridge connects residues Cys-267 and Cys-281. Arg-272 serves as a coordination point for xyloglucan.

It belongs to the glycosyl hydrolase 16 family. XTH group 2 subfamily. Post-translationally, contains at least one intrachain disulfide bond essential for its enzymatic activity. In terms of tissue distribution, root specific.

The protein resides in the secreted. It is found in the cell wall. Its subcellular location is the extracellular space. The protein localises to the apoplast. It catalyses the reaction breaks a beta-(1-&gt;4) bond in the backbone of a xyloglucan and transfers the xyloglucanyl segment on to O-4 of the non-reducing terminal glucose residue of an acceptor, which can be a xyloglucan or an oligosaccharide of xyloglucan.. Functionally, catalyzes xyloglucan endohydrolysis (XEH) and/or endotransglycosylation (XET). Cleaves and religates xyloglucan polymers, an essential constituent of the primary cell wall, and thereby participates in cell wall construction of growing tissues. This Arabidopsis thaliana (Mouse-ear cress) protein is Probable xyloglucan endotransglucosylase/hydrolase protein 18 (XTH18).